Here is a 361-residue protein sequence, read N- to C-terminus: Phosphoserine aminotransferase (361 aa).

L-glutamate is bound by residues serine 9 and arginine 42. Residues 76–77, tryptophan 102, threonine 153, aspartate 173, and glutamine 196 contribute to the pyridoxal 5'-phosphate site; that span reads AR. Lysine 197 is modified (N6-(pyridoxal phosphate)lysine). 238–239 is a binding site for pyridoxal 5'-phosphate; the sequence is NT.

The protein belongs to the class-V pyridoxal-phosphate-dependent aminotransferase family. SerC subfamily. Homodimer. It depends on pyridoxal 5'-phosphate as a cofactor.

The protein localises to the cytoplasm. It catalyses the reaction O-phospho-L-serine + 2-oxoglutarate = 3-phosphooxypyruvate + L-glutamate. It carries out the reaction 4-(phosphooxy)-L-threonine + 2-oxoglutarate = (R)-3-hydroxy-2-oxo-4-phosphooxybutanoate + L-glutamate. It functions in the pathway amino-acid biosynthesis; L-serine biosynthesis; L-serine from 3-phospho-D-glycerate: step 2/3. Its pathway is cofactor biosynthesis; pyridoxine 5'-phosphate biosynthesis; pyridoxine 5'-phosphate from D-erythrose 4-phosphate: step 3/5. In terms of biological role, catalyzes the reversible conversion of 3-phosphohydroxypyruvate to phosphoserine and of 3-hydroxy-2-oxo-4-phosphonooxybutanoate to phosphohydroxythreonine. The polypeptide is Phosphoserine aminotransferase (Serratia proteamaculans (strain 568)).